The sequence spans 370 residues: tRNA-specific 2-thiouridylase MnmA (370 aa).

Residues 12 to 19 (GMSGGVDS) and Leu38 each bind ATP. Cys105 functions as the Nucleophile in the catalytic mechanism. Cys105 and Cys204 are joined by a disulfide. ATP is bound at residue Gly129. The segment at 153–155 (KDQ) is interaction with tRNA. Cys204 functions as the Cysteine persulfide intermediate in the catalytic mechanism. Residues 310-311 (RY) form an interaction with tRNA region.

The protein belongs to the MnmA/TRMU family.

The protein resides in the cytoplasm. The catalysed reaction is S-sulfanyl-L-cysteinyl-[protein] + uridine(34) in tRNA + AH2 + ATP = 2-thiouridine(34) in tRNA + L-cysteinyl-[protein] + A + AMP + diphosphate + H(+). Its function is as follows. Catalyzes the 2-thiolation of uridine at the wobble position (U34) of tRNA, leading to the formation of s(2)U34. This Desulfitobacterium hafniense (strain Y51) protein is tRNA-specific 2-thiouridylase MnmA.